Consider the following 407-residue polypeptide: Peptidase T (407 aa).

His-82 is a Zn(2+) binding site. Residue Asp-84 is part of the active site. A Zn(2+)-binding site is contributed by Asp-143. Glu-177 functions as the Proton acceptor in the catalytic mechanism. The Zn(2+) site is built by Glu-178, Asp-200, and His-382.

This sequence belongs to the peptidase M20B family. It depends on Zn(2+) as a cofactor.

It localises to the cytoplasm. The catalysed reaction is Release of the N-terminal residue from a tripeptide.. Functionally, cleaves the N-terminal amino acid of tripeptides. This is Peptidase T from Streptococcus pyogenes serotype M1.